The chain runs to 343 residues: D-beta-hydroxybutyrate dehydrogenase, mitochondrial (343 aa).

A mitochondrion-targeting transit peptide spans 1-46; that stretch reads MLAARLSRPLSQLPGKALSVRDRENGTRHTLLFYPASFSPDTRRTY. 60–84 contacts NAD(+); that stretch reads ITGCDSGFGFSLAKHLHSKGFLVFA. N6-acetyllysine occurs at positions 73 and 97. Lysine 103 is subject to N6-acetyllysine; alternate. Lysine 103 carries the post-translational modification N6-succinyllysine; alternate. 2 positions are modified to N6-acetyllysine: lysine 132 and lysine 177. Residue methionine 196 participates in substrate binding. The active-site Proton acceptor is cysteine 209. N6-acetyllysine is present on lysine 212. O-linked (GlcNAc) serine glycosylation is present at serine 219. Serine 246 carries the post-translational modification Phosphoserine. Lysine 258 carries the N6-acetyllysine modification. At lysine 259 the chain carries N6-acetyllysine; alternate. Position 259 is an N6-succinyllysine; alternate (lysine 259). Residue lysine 280 is modified to N6-acetyllysine.

It belongs to the short-chain dehydrogenases/reductases (SDR) family. As to quaternary structure, homotetramer. Acetylation of Lys-132 is observed in liver mitochondria from fasted mice but not from fed mice.

It is found in the mitochondrion inner membrane. Its subcellular location is the mitochondrion matrix. The enzyme catalyses (R)-3-hydroxybutanoate + NAD(+) = acetoacetate + NADH + H(+). Its activity is regulated as follows. Requires phosphatidylcholine as an allosteric activator for enzymatic activity. In Mus musculus (Mouse), this protein is D-beta-hydroxybutyrate dehydrogenase, mitochondrial.